A 1248-amino-acid chain; its full sequence is Period circadian protein homolog 2 (1248 aa).

The interval 1 to 57 (MNGYVEFSPSPTKESVEPQPSQAVLQEDVDMSSGSSGHENCSMGRDSQGSDCDDNGK) is disordered. 2 stretches are compositionally biased toward polar residues: residues 9–24 (PSPT…SQAV) and 32–50 (SSGS…SQGS). The Nuclear export signal 1 motif lies at 105–114 (LIRTLRELKV). The 68-residue stretch at 175–242 (ITSEYIVKNA…FHSYTTPYKL (68 aa)) folds into the PAS 1 domain. The LXXLL signature appears at 302–306 (LCCLL). Residues 315–381 (YEAPRIPPEK…MLAIHKKILQ (67 aa)) enclose the PAS 2 domain. Residues 389–432 (YSPIRFRARNGEYITLDTSWSSFINPWSRKISFIIGRHKVRVGP) enclose the PAC domain. The Nuclear export signal 2 motif lies at 456–465 (LTEQIHRLLM). Disordered stretches follow at residues 467-563 (PVPH…SLPK) and 619-638 (VSPG…VSSH). Positions 474-478 (SGYGS) are important for protein stability. Residues 506–706 (RKSGISKNGS…GAPGGLSQEK (201 aa)) are CSNK1E binding domain. A compositionally biased stretch (polar residues) spans 510–521 (ISKNGSKTQTRS). 4 positions are modified to phosphoserine: S521, S524, S527, and S540. Basic and acidic residues predominate over residues 523–534 (FSHESGEQKEIA). Phosphoserine occurs at positions 656, 690, 694, 703, and 755. Disordered stretches follow at residues 675-708 (DKKP…EKGP) and 751-829 (RAQA…PSAP). The Nuclear localization signal motif lies at 773–789 (KKTGKNRKLKSKRVKTR). Residues 774–787 (KTGKNRKLKSKRVK) are compositionally biased toward basic residues. Residues 816–827 (SPSDTSQSSCPS) show a composition bias toward low complexity. The tract at residues 873-1058 (DFAVQPLPLA…DLCSATGSAL (186 aa)) is interaction with PPARG. At S930 the chain carries Phosphoserine. Positions 950-971 (TPPAATVTSGRASPPLFQSRGS) are disordered. T955 carries the phosphothreonine modification. S962 is subject to Phosphoserine. Positions 974 to 981 (LQLNLLQL) match the Nuclear export signal 3 motif. The disordered stretch occupies residues 984-1035 (APEGSTGAAGTSGTTGTAAAGLDCTPGTSRDRQPKAPSTCKEPSDTQNSDAL). Residues 987–1004 (GSTGAAGTSGTTGTAAAG) show a composition bias toward low complexity. An LXXLL motif is present at residues 1042-1046 (LNLLL). Positions 1057-1080 (ALSGSGASATSDSLGSGSLGCDAS) are enriched in low complexity. Positions 1057-1113 (ALSGSGASATSDSLGSGSLGCDASRSGAGSSDTSHTSKYFGSIDSSENNHKAKVSTD) are disordered. The segment covering 1083-1102 (GAGSSDTSHTSKYFGSIDSS) has biased composition (polar residues). Basic and acidic residues predominate over residues 1103-1112 (ENNHKAKVST). S1117 carries the post-translational modification Phosphoserine. The segment at 1148-1248 (SRDLESVLRE…LTGPRIEAQT (101 aa)) is CRY binding domain. The segment at 1215 to 1248 (PYEEDSPSPGLCDTSEAKEEEGEQLTGPRIEAQT) is disordered.

In terms of assembly, homodimer. Component of the circadian core oscillator, which includes the CRY proteins, CLOCK or NPAS2, BMAL1 or BMAL2, CSNK1D and/or CSNK1E, TIMELESS, and the PER proteins. Interacts with CLOCK-BMAL1 (off DNA). Interacts with BMAL2. Interacts directly with PER1 and PER3, and through a C-terminal domain, with CRY1 and CRY2. Interacts (via PAS 2 domain) with TIMELESS. Interacts with NFIL3. Different large complexes have been identified with different repressive functions. The core of PER complexes is composed of at least PER1, PER2, PER3, CRY1, CRY2, CSNK1D and/or CSNK1E. The large PER complex involved in the repression of transcriptional termination is composed of at least PER2, CDK9, DDX5, DHX9, NCBP1 and POLR2A (active). The large PER complex involved in the histone deacetylation is composed of at least HDAC1, PER2, SFPQ and SIN3A. The large PER complex involved in the histone methylation is composed of at least PER2, CBX3, TRIM28, SUV39H1 and/or SUV39H2; CBX3 mediates the formation of the complex. Interacts with SETX; the interaction inhibits termination of circadian target genes. Interacts with the nuclear receptors HNF4A, NR1D1, NR4A2, RORA, PPARA, PPARG and THRA; the interaction with at least PPARG is ligand dependent. Interacts with PML. Interacts (phosphorylated) with BTRC and FBXW11; the interactions trigger proteasomal degradation. Interacts with NONO and SFPQ. Interacts with PRKCDBP. Interacts with MAGEL2. Interacts with MAP1LC3B. Interacts with HNF4A. Post-translationally, acetylated. Deacetylated by SIRT1, resulting in decreased protein stability. Deacetylated by SIRT6, preventing its degradation by the proteasome, resulting in increased protein stability. In terms of processing, phosphorylated by CSNK1E and CSNK1D. Phosphorylation results in PER2 protein degradation. May be dephosphorylated by PP1. Ubiquitinated, leading to its proteasomal degradation. Ubiquitination may be inhibited by CRY1. In terms of tissue distribution, expressed in the brain, mainly in the suprachiasmatic nucleus (SCN). Expression also found in the harderian gland, lung, eye, intestine, liver and skeletal muscle.

It localises to the nucleus. The protein localises to the cytoplasm. Its subcellular location is the perinuclear region. In terms of biological role, transcriptional repressor which forms a core component of the circadian clock. The circadian clock, an internal time-keeping system, regulates various physiological processes through the generation of approximately 24 hour circadian rhythms in gene expression, which are translated into rhythms in metabolism and behavior. It is derived from the Latin roots 'circa' (about) and 'diem' (day) and acts as an important regulator of a wide array of physiological functions including metabolism, sleep, body temperature, blood pressure, endocrine, immune, cardiovascular, and renal function. Consists of two major components: the central clock, residing in the suprachiasmatic nucleus (SCN) of the brain, and the peripheral clocks that are present in nearly every tissue and organ system. Both the central and peripheral clocks can be reset by environmental cues, also known as Zeitgebers (German for 'timegivers'). The predominant Zeitgeber for the central clock is light, which is sensed by retina and signals directly to the SCN. The central clock entrains the peripheral clocks through neuronal and hormonal signals, body temperature and feeding-related cues, aligning all clocks with the external light/dark cycle. Circadian rhythms allow an organism to achieve temporal homeostasis with its environment at the molecular level by regulating gene expression to create a peak of protein expression once every 24 hours to control when a particular physiological process is most active with respect to the solar day. Transcription and translation of core clock components (CLOCK, NPAS2, BMAL1, BMAL2, PER1, PER2, PER3, CRY1 and CRY2) plays a critical role in rhythm generation, whereas delays imposed by post-translational modifications (PTMs) are important for determining the period (tau) of the rhythms (tau refers to the period of a rhythm and is the length, in time, of one complete cycle). A diurnal rhythm is synchronized with the day/night cycle, while the ultradian and infradian rhythms have a period shorter and longer than 24 hours, respectively. Disruptions in the circadian rhythms contribute to the pathology of cardiovascular diseases, cancer, metabolic syndrome and aging. A transcription/translation feedback loop (TTFL) forms the core of the molecular circadian clock mechanism. Transcription factors, CLOCK or NPAS2 and BMAL1 or BMAL2, form the positive limb of the feedback loop, act in the form of a heterodimer and activate the transcription of core clock genes and clock-controlled genes (involved in key metabolic processes), harboring E-box elements (5'-CACGTG-3') within their promoters. The core clock genes: PER1/2/3 and CRY1/2 which are transcriptional repressors form the negative limb of the feedback loop and interact with the CLOCK|NPAS2-BMAL1|BMAL2 heterodimer inhibiting its activity and thereby negatively regulating their own expression. This heterodimer also activates nuclear receptors NR1D1/2 and RORA/B/G, which form a second feedback loop and which activate and repress BMAL1 transcription, respectively. PER1 and PER2 proteins transport CRY1 and CRY2 into the nucleus with appropriate circadian timing, but also contribute directly to repression of clock-controlled target genes through interaction with several classes of RNA-binding proteins, helicases and others transcriptional repressors. PER appears to regulate circadian control of transcription by at least three different modes. First, interacts directly with the CLOCK-BMAL1 at the tail end of the nascent transcript peak to recruit complexes containing the SIN3-HDAC that remodel chromatin to repress transcription. Second, brings H3K9 methyltransferases such as SUV39H1 and SUV39H2 to the E-box elements of the circadian target genes, like PER2 itself or PER1. The recruitment of each repressive modifier to the DNA seems to be very precisely temporally orchestrated by the large PER complex, the deacetylases acting before than the methyltransferases. Additionally, large PER complexes are also recruited to the target genes 3' termination site through interactions with RNA-binding proteins and helicases that may play a role in transcription termination to regulate transcription independently of CLOCK-BMAL1 interactions. Recruitment of large PER complexes to the elongating polymerase at PER and CRY termination sites inhibited SETX action, impeding RNA polymerase II release and thereby repressing transcriptional reinitiation. May propagate clock information to metabolic pathways via the interaction with nuclear receptors. Coactivator of PPARA and corepressor of NR1D1, binds rhythmically at the promoter of nuclear receptors target genes like BMAL1 or G6PC1. Directly and specifically represses PPARG proadipogenic activity by blocking PPARG recruitment to target promoters and thereby transcriptional activation. Required for fatty acid and lipid metabolism, is involved as well in the regulation of circulating insulin levels. Plays an important role in the maintenance of cardiovascular functions through the regulation of NO and vasodilatatory prostaglandins production in aortas. Controls circadian glutamate uptake in synaptic vesicles through the regulation of VGLUT1 expression. May also be involved in the regulation of inflammatory processes. Represses the CLOCK-BMAL1 induced transcription of BHLHE40/DEC1 and ATF4. Negatively regulates the formation of the TIMELESS-CRY1 complex by competing with TIMELESS for binding to CRY1. In Spalax judaei (Judean Mountains blind mole rat), this protein is Period circadian protein homolog 2 (PER2).